The following is a 277-amino-acid chain: Diaminopimelate epimerase (277 aa).

Positions 13, 46, and 66 each coordinate substrate. The active-site Proton donor is the C75. Substrate contacts are provided by residues 76–77 (GN), N160, N193, and 211–212 (ER). The Proton acceptor role is filled by C220. Position 221–222 (221–222 (GS)) interacts with substrate.

This sequence belongs to the diaminopimelate epimerase family. Homodimer.

It is found in the cytoplasm. It carries out the reaction (2S,6S)-2,6-diaminopimelate = meso-2,6-diaminopimelate. It functions in the pathway amino-acid biosynthesis; L-lysine biosynthesis via DAP pathway; DL-2,6-diaminopimelate from LL-2,6-diaminopimelate: step 1/1. Its function is as follows. Catalyzes the stereoinversion of LL-2,6-diaminopimelate (L,L-DAP) to meso-diaminopimelate (meso-DAP), a precursor of L-lysine and an essential component of the bacterial peptidoglycan. The polypeptide is Diaminopimelate epimerase (Legionella pneumophila (strain Lens)).